The following is a 251-amino-acid chain: MTEAQRHQILLEMLAQLGFVTVEKVVERLGISPATARRDINKLDERGKLKKVRNGAEAITQQRPRWTPMNLHQAQNHDEKVRIAKAASQLVNPGESVVINCGSTAFLLGREMCGKPVQIITNYLPLANYLIDQEHDSVIIMGGQYNKSQSITLSPQGSENSLYAGHWMFTSGKGLTAEGLYKTDMLTAMAEQKMLSVVGKLVVLVDSSKIGERAGMLFSRADQIDMLITGKNANPEILQQLEAQGVSILRV.

One can recognise an HTH deoR-type domain in the interval 3-58 (EAQRHQILLEMLAQLGFVTVEKVVERLGISPATARRDINKLDERGKLKKVRNGAEA). Residues 20-39 (VTVEKVVERLGISPATARRD) constitute a DNA-binding region (H-T-H motif).

It localises to the cytoplasm. In terms of biological role, represses ulaG and the ulaABCDEF operon. This is HTH-type transcriptional regulator UlaR from Shigella sonnei (strain Ss046).